Here is a 162-residue protein sequence, read N- to C-terminus: Probable chemoreceptor glutamine deamidase CheD (162 aa).

The protein belongs to the CheD family.

The catalysed reaction is L-glutaminyl-[protein] + H2O = L-glutamyl-[protein] + NH4(+). In terms of biological role, probably deamidates glutamine residues to glutamate on methyl-accepting chemotaxis receptors (MCPs), playing an important role in chemotaxis. The chain is Probable chemoreceptor glutamine deamidase CheD from Caldanaerobacter subterraneus subsp. tengcongensis (strain DSM 15242 / JCM 11007 / NBRC 100824 / MB4) (Thermoanaerobacter tengcongensis).